The sequence spans 156 residues: ATP synthase subunit b (156 aa).

The chain crosses the membrane as a helical span at residues 7–27 (LFVQAIVFAILVWFTMKFVWP).

The protein belongs to the ATPase B chain family. As to quaternary structure, F-type ATPases have 2 components, F(1) - the catalytic core - and F(0) - the membrane proton channel. F(1) has five subunits: alpha(3), beta(3), gamma(1), delta(1), epsilon(1). F(0) has three main subunits: a(1), b(2) and c(10-14). The alpha and beta chains form an alternating ring which encloses part of the gamma chain. F(1) is attached to F(0) by a central stalk formed by the gamma and epsilon chains, while a peripheral stalk is formed by the delta and b chains.

The protein localises to the cell inner membrane. F(1)F(0) ATP synthase produces ATP from ADP in the presence of a proton or sodium gradient. F-type ATPases consist of two structural domains, F(1) containing the extramembraneous catalytic core and F(0) containing the membrane proton channel, linked together by a central stalk and a peripheral stalk. During catalysis, ATP synthesis in the catalytic domain of F(1) is coupled via a rotary mechanism of the central stalk subunits to proton translocation. Functionally, component of the F(0) channel, it forms part of the peripheral stalk, linking F(1) to F(0). In Polaromonas sp. (strain JS666 / ATCC BAA-500), this protein is ATP synthase subunit b.